We begin with the raw amino-acid sequence, 638 residues long: 1-deoxy-D-xylulose-5-phosphate synthase (638 aa).

Thiamine diphosphate contacts are provided by residues His-71 and 112–114; that span reads SHA. Asp-144 is a Mg(2+) binding site. Residues 145-146, Asn-173, Tyr-284, and Glu-365 each bind thiamine diphosphate; that span reads GA. Asn-173 lines the Mg(2+) pocket.

Belongs to the transketolase family. DXPS subfamily. Homodimer. Requires Mg(2+) as cofactor. Thiamine diphosphate is required as a cofactor.

It carries out the reaction D-glyceraldehyde 3-phosphate + pyruvate + H(+) = 1-deoxy-D-xylulose 5-phosphate + CO2. The protein operates within metabolic intermediate biosynthesis; 1-deoxy-D-xylulose 5-phosphate biosynthesis; 1-deoxy-D-xylulose 5-phosphate from D-glyceraldehyde 3-phosphate and pyruvate: step 1/1. Its function is as follows. Catalyzes the acyloin condensation reaction between C atoms 2 and 3 of pyruvate and glyceraldehyde 3-phosphate to yield 1-deoxy-D-xylulose-5-phosphate (DXP). The protein is 1-deoxy-D-xylulose-5-phosphate synthase of Mycobacterium sp. (strain JLS).